The primary structure comprises 152 residues: uncharacterized protein (152 aa).

This is an uncharacterized protein from Rickettsia prowazekii (strain Madrid E).